The chain runs to 407 residues: Deacetylase Atu3266 (407 aa).

6 residues coordinate Zn(2+): His-75, His-77, Lys-173, His-206, His-229, and Asp-289. Position 173 is an N6-carboxylysine (Lys-173).

It belongs to the metallo-dependent hydrolases superfamily. Atu3266/EF_0837 deacetylase family. Homohexamer, dimer of trimers. It depends on Zn(2+) as a cofactor.

Esterase that catalyzes the deacetylation of acetyl-(R)-mandelate (in vitro). Can also hydrolyze acetyl glycolate, but with lower efficiency. Has very low N-acetyl-D-amino acid deacetylase activity with N-acetyl-D-serine and N-acetyl-D-threonine (in vitro). Theoretical substrate docking studies suggest that other N-acetylated amino acids may optimally occupy the active site and may in fact be the physiological substrates. This chain is Deacetylase Atu3266, found in Agrobacterium fabrum (strain C58 / ATCC 33970) (Agrobacterium tumefaciens (strain C58)).